The following is a 751-amino-acid chain: Adhesive plaque matrix protein (751 aa).

An N-terminal signal peptide occupies residues 1-20; that stretch reads MEGIKLNLCLLCIFTCDILG. Residues 21–41 form a nonrepetitive linker region; it reads FSNGNIYNAHGSAYAGASAGA. 55 consecutive repeat copies span residues 109 to 118, 119 to 128, 129 to 138, 139 to 148, 149 to 158, 159 to 168, 169 to 178, 179 to 188, 189 to 198, 199 to 208, 209 to 218, 219 to 228, 229 to 238, 239 to 248, 249 to 258, 259 to 268, 269 to 278, 279 to 288, 289 to 298, 299 to 308, 309 to 318, 319 to 328, 329 to 338, 339 to 348, 349 to 358, 359 to 368, 369 to 378, 379 to 388, 389 to 398, 399 to 408, 409 to 418, 419 to 428, 429 to 438, 439 to 448, 449 to 458, 459 to 468, 469 to 478, 479 to 488, 489 to 498, 499 to 508, 509 to 518, 519 to 528, 529 to 538, 539 to 548, 549 to 558, 559 to 568, 569 to 578, 579 to 588, 589 to 598, 599 to 608, 609 to 618, 619 to 628, 629 to 638, 639 to 648, and 649 to 658. The segment at 109 to 732 is 63 X 10 AA tandem repeats of Y-[KR]-[APTS]-K-[KPMSLTIVA]-[STR]-Y-[PLS]-[PASRQT]-[STI]; the sequence is YKPKMTYPPT…YKPKPSYPPT (624 aa). The segment covering 158–167 has biased composition (low complexity); the sequence is TYKPKLTYPP. The disordered stretch occupies residues 158-359; sequence TYKPKLTYPP…KPKTTYPPSY (202 aa). Pro residues predominate over residues 168 to 184; the sequence is TYKPKPSYPPTYKPKPS. Residues 185-262 show a composition bias toward low complexity; sequence YPATYKSKSS…KTYPSTYKPK (78 aa). Low complexity-rich tracts occupy residues 288-343 and 350-359; these read TYKA…KAKP and KPKTTYPPSY. Residues 397–636 form a disordered region; that stretch reads PTYKAKPSYP…PTYKAKPSYP (240 aa). The segment covering 444–486 has biased composition (low complexity); that stretch reads SYPPTYKAKPSYPPTYKAKPSYPPTYKAKPSYPPTYKTKPSYP. The 56; truncated repeat unit spans residues 659 to 662; that stretch reads YPST. Residues 660–751 form a disordered region; the sequence is PSTYKAKPSY…KKKISYPSQY (92 aa). Positions 662–677 are enriched in low complexity; the sequence is TYKAKPSYPPTYKAKP. A run of 7 repeats spans residues 663-672, 673-682, 683-692, 693-702, 703-712, 713-722, and 723-732. The segment covering 678–690 has biased composition (pro residues); sequence SYPPTYKPKPSYP. Low complexity predominate over residues 691–721; the sequence is PTYKSKSSYPSSYKPKKTYPPTYKPKLTYPP.

In terms of processing, hydroxylated on proline (mono- or dihydroxylation) and tyrosine residues (to L-DOPA = 3',4'-dihydroxyphenylalanine) of the tandem repeats. As to expression, produced by the byssal gland.

The protein resides in the secreted. In terms of biological role, provides adhesiveness to the mussel's foot. Mussels produce one of the strongest water insoluble glues. The mussel's adhesive is a bundle of threads, called a byssus, formed by a fibrous collagenous core coated with adhesive proteins. This is Adhesive plaque matrix protein (FP1) from Mytilus galloprovincialis (Mediterranean mussel).